A 264-amino-acid polypeptide reads, in one-letter code: Undecaprenyl-diphosphatase (264 aa).

The next 8 membrane-spanning stretches (helical) occupy residues 1-21 (MDLI…FLPI), 39-59 (QGLA…AVYF), 87-107 (WYLI…DDLI), 111-131 (LRST…LWVA), 144-164 (IALS…IPGT), 187-207 (FSFL…GLQL), 208-228 (VLSA…LSAV), and 244-264 (IGML…FIAV).

It belongs to the UppP family.

The protein localises to the cell inner membrane. It catalyses the reaction di-trans,octa-cis-undecaprenyl diphosphate + H2O = di-trans,octa-cis-undecaprenyl phosphate + phosphate + H(+). Functionally, catalyzes the dephosphorylation of undecaprenyl diphosphate (UPP). Confers resistance to bacitracin. The polypeptide is Undecaprenyl-diphosphatase (Teredinibacter turnerae (strain ATCC 39867 / T7901)).